Consider the following 141-residue polypeptide: MKTARRRSRELAVQAVYQSLINRTAAPEIAKNIREMSDFAKADEELFNKLFFGTQTNAADYIQKIRPLLDRDEKDLNPIERAVLLTACHELSAMPETPYPVIINEAIEVTKTFGGTDGHKFVNGILDKLAAQIRPDEPKRR.

Belongs to the NusB family.

Its function is as follows. Involved in transcription antitermination. Required for transcription of ribosomal RNA (rRNA) genes. Binds specifically to the boxA antiterminator sequence of the ribosomal RNA (rrn) operons. The chain is Transcription antitermination protein NusB from Neisseria gonorrhoeae (strain ATCC 700825 / FA 1090).